The sequence spans 102 residues: Acid shock protein (102 aa).

An N-terminal signal peptide occupies residues 1-21; sequence MKKVLALVVAAAMGLSSAAFA. The span at 22–41 shows a compositional bias: low complexity; sequence AETATTPAPTATTTKAAPAK. The propeptide occupies 22 to 58; sequence AETATTPAPTATTTKAAPAKTTHHKKQHKAAPAQKAQ. The interval 22–102 is disordered; sequence AETATTPAPT…PAKPAAQPAA (81 aa). A compositionally biased stretch (basic residues) spans 80-90; the sequence is AAKKHAGKHGH. Low complexity predominate over residues 91–102; sequence QQPAKPAAQPAA.

Belongs to the Asr family. Post-translationally, proteolytic processing gives rise to the active protein.

It localises to the periplasm. Functionally, required for growth and/or survival at acidic conditions. This is Acid shock protein from Shigella flexneri.